The chain runs to 208 residues: MLIKYCGIRSKQDIALIEKSAATHIGFIFYPRSKRYVKPERVNEFVTDEIKKQVSLVGVFVNTPVDQILEIASVTNLDVIQCHGQETAADVRQLKQRGYEVWKALPHNKETLQQMHVYEEADGYVIDSKVKEQFGGTGVAFDWSFVPQYESAAQRLGKKCFIAGGINACNIENLLPYQPGAIDISGGIETNGTKDYTKIIEIERKIIL.

It belongs to the TrpF family.

The catalysed reaction is N-(5-phospho-beta-D-ribosyl)anthranilate = 1-(2-carboxyphenylamino)-1-deoxy-D-ribulose 5-phosphate. Its pathway is amino-acid biosynthesis; L-tryptophan biosynthesis; L-tryptophan from chorismate: step 3/5. This chain is N-(5'-phosphoribosyl)anthranilate isomerase (trpF), found in Priestia megaterium (strain ATCC 12872 / QMB1551) (Bacillus megaterium).